Here is a 503-residue protein sequence, read N- to C-terminus: ATP synthase subunit alpha, chloroplastic (503 aa).

170-177 (GDRQTGKT) lines the ATP pocket.

This sequence belongs to the ATPase alpha/beta chains family. F-type ATPases have 2 components, CF(1) - the catalytic core - and CF(0) - the membrane proton channel. CF(1) has five subunits: alpha(3), beta(3), gamma(1), delta(1), epsilon(1). CF(0) has four main subunits: a, b, b' and c.

The protein resides in the plastid. The protein localises to the chloroplast thylakoid membrane. The enzyme catalyses ATP + H2O + 4 H(+)(in) = ADP + phosphate + 5 H(+)(out). Its function is as follows. Produces ATP from ADP in the presence of a proton gradient across the membrane. The alpha chain is a regulatory subunit. The chain is ATP synthase subunit alpha, chloroplastic from Gracilaria tenuistipitata var. liui (Red alga).